A 435-amino-acid chain; its full sequence is Cyclin-J-like protein (435 aa).

Positions 14 to 191 constitute a Cyclin N-terminal domain; the sequence is DVHCTLREKE…LLEAFSWNLC (178 aa). The tract at residues 120–142 is disordered; it reads SSNSPASAPHPPPTPPQVAETTG.

This sequence belongs to the cyclin family. Cyclin J subfamily.

The sequence is that of Cyclin-J-like protein (CCNJL) from Homo sapiens (Human).